The sequence spans 448 residues: Adenylosuccinate synthetase (448 aa).

Residues 22–28 (GDEGKGK) and 50–52 (GHT) contribute to the GTP site. The active-site Proton acceptor is D23. The Mg(2+) site is built by D23 and G50. Residues 23–26 (DEGK), 48–51 (NAGH), T139, R153, Q234, T249, and R321 each bind IMP. H51 functions as the Proton donor in the catalytic mechanism. 317 to 323 (SVTGRPR) lines the substrate pocket. GTP-binding positions include R323, 349-351 (KLD), and 431-433 (STG).

The protein belongs to the adenylosuccinate synthetase family. In terms of assembly, homodimer. Mg(2+) serves as cofactor.

Its subcellular location is the cytoplasm. The catalysed reaction is IMP + L-aspartate + GTP = N(6)-(1,2-dicarboxyethyl)-AMP + GDP + phosphate + 2 H(+). Its pathway is purine metabolism; AMP biosynthesis via de novo pathway; AMP from IMP: step 1/2. In terms of biological role, plays an important role in the de novo pathway of purine nucleotide biosynthesis. Catalyzes the first committed step in the biosynthesis of AMP from IMP. The protein is Adenylosuccinate synthetase of Paraburkholderia phymatum (strain DSM 17167 / CIP 108236 / LMG 21445 / STM815) (Burkholderia phymatum).